The chain runs to 384 residues: Galactokinase (384 aa).

Substrate is bound at residue 34–37; that stretch reads EHTD. 123–129 contacts ATP; the sequence is SSGLSSS. Serine 129 and glutamate 161 together coordinate Mg(2+). The Proton acceptor role is filled by aspartate 173. Residue tyrosine 222 coordinates substrate.

Belongs to the GHMP kinase family. GalK subfamily.

It is found in the cytoplasm. The catalysed reaction is alpha-D-galactose + ATP = alpha-D-galactose 1-phosphate + ADP + H(+). It participates in carbohydrate metabolism; galactose metabolism. Its function is as follows. Catalyzes the transfer of the gamma-phosphate of ATP to D-galactose to form alpha-D-galactose-1-phosphate (Gal-1-P). This is Galactokinase from Actinobacillus pleuropneumoniae (Haemophilus pleuropneumoniae).